We begin with the raw amino-acid sequence, 462 residues long: Argininosuccinate lyase (462 aa).

This sequence belongs to the lyase 1 family. Argininosuccinate lyase subfamily.

It is found in the cytoplasm. The enzyme catalyses 2-(N(omega)-L-arginino)succinate = fumarate + L-arginine. It functions in the pathway amino-acid biosynthesis; L-arginine biosynthesis; L-arginine from L-ornithine and carbamoyl phosphate: step 3/3. This Xanthobacter autotrophicus (strain ATCC BAA-1158 / Py2) protein is Argininosuccinate lyase.